We begin with the raw amino-acid sequence, 103 residues long: Large ribosomal subunit protein bL21 (103 aa).

The protein belongs to the bacterial ribosomal protein bL21 family. In terms of assembly, part of the 50S ribosomal subunit. Contacts protein L20.

This protein binds to 23S rRNA in the presence of protein L20. The chain is Large ribosomal subunit protein bL21 from Bordetella avium (strain 197N).